We begin with the raw amino-acid sequence, 612 residues long: Chaperone protein DnaK (612 aa).

Residue Thr-173 is modified to Phosphothreonine; by autocatalysis. Positions Ala-576–Lys-612 are disordered. The span at Lys-578–Ala-588 shows a compositional bias: low complexity. The span at Asn-596–Lys-612 shows a compositional bias: acidic residues.

The protein belongs to the heat shock protein 70 family.

Functionally, acts as a chaperone. This is Chaperone protein DnaK from Bacillus velezensis (strain DSM 23117 / BGSC 10A6 / LMG 26770 / FZB42) (Bacillus amyloliquefaciens subsp. plantarum).